Here is a 250-residue protein sequence, read N- to C-terminus: Ribosomal RNA small subunit methyltransferase J (250 aa).

Residues 101–102, 117–118, 153–154, and Asp-171 contribute to the S-adenosyl-L-methionine site; these read RD, ER, and SS.

The protein belongs to the methyltransferase superfamily. RsmJ family.

Its subcellular location is the cytoplasm. The enzyme catalyses guanosine(1516) in 16S rRNA + S-adenosyl-L-methionine = N(2)-methylguanosine(1516) in 16S rRNA + S-adenosyl-L-homocysteine + H(+). Its function is as follows. Specifically methylates the guanosine in position 1516 of 16S rRNA. The sequence is that of Ribosomal RNA small subunit methyltransferase J from Klebsiella pneumoniae (strain 342).